Reading from the N-terminus, the 315-residue chain is Cytosolic Fe-S cluster assembly factor nubp1-A (315 aa).

The segment at 1-23 is disordered; sequence MADIPDNAPQHCPGTDSTEAGKS. Residues Cys-12, Cys-26, Cys-29, and Cys-35 each coordinate [4Fe-4S] cluster. 66 to 73 contributes to the ATP binding site; the sequence is GKGGVGKS. Cys-239 and Cys-242 together coordinate [4Fe-4S] cluster.

It belongs to the Mrp/NBP35 ATP-binding proteins family. NUBP1/NBP35 subfamily. Heterotetramer of 2 nubp1 and 2 nubp2 chains. It depends on [4Fe-4S] cluster as a cofactor.

It is found in the cytoplasm. Functionally, component of the cytosolic iron-sulfur (Fe/S) protein assembly (CIA) machinery. Required for maturation of extramitochondrial Fe-S proteins. The nubp1-nubp2 heterotetramer forms a Fe-S scaffold complex, mediating the de novo assembly of an Fe-S cluster and its transfer to target apoproteins. The polypeptide is Cytosolic Fe-S cluster assembly factor nubp1-A (nubp1-A) (Xenopus laevis (African clawed frog)).